Here is a 399-residue protein sequence, read N- to C-terminus: Argonaute-binding protein 1 (399 aa).

As to quaternary structure, component of the argonaute siRNA chaperone (ARC) complex composed of ago1, arb1 and arb2. Interacts with ago1.

It localises to the nucleus. The protein localises to the cytoplasm. Component of the argonaute siRNA chaperone (ARC) complex which is required for histone H3K9 methylation, heterochromatin assembly and siRNA generation. The ARC complex contains mostly double-stranded siRNA. Inhibits the release of the siRNA passenger strand from ago1 together with arb2. Inhibits the slicer activity of ago1. Required for swi6 localization to the centromeric repeats. This is Argonaute-binding protein 1 (arb1) from Schizosaccharomyces pombe (strain 972 / ATCC 24843) (Fission yeast).